The following is a 720-amino-acid chain: Catalase-peroxidase (720 aa).

A signal peptide spans 1-21; the sequence is MSENKCPVMHGSATTTENSMA. Residues 94 to 222 constitute a cross-link (tryptophyl-tyrosyl-methioninium (Trp-Tyr) (with M-248)); that stretch reads WHAAGTYRIA…LAAVMMGLIY (129 aa). Catalysis depends on histidine 95, which acts as the Proton acceptor. Positions 222-248 form a cross-link, tryptophyl-tyrosyl-methioninium (Tyr-Met) (with W-94); it reads YVNPEGVDGKPDPLKTAQDIRETFARM. Histidine 263 contacts heme b.

This sequence belongs to the peroxidase family. Peroxidase/catalase subfamily. In terms of assembly, homodimer or homotetramer. Heme b serves as cofactor. Post-translationally, formation of the three residue Trp-Tyr-Met cross-link is important for the catalase, but not the peroxidase activity of the enzyme.

The enzyme catalyses H2O2 + AH2 = A + 2 H2O. It catalyses the reaction 2 H2O2 = O2 + 2 H2O. In terms of biological role, bifunctional enzyme with both catalase and broad-spectrum peroxidase activity. The protein is Catalase-peroxidase of Shewanella denitrificans (strain OS217 / ATCC BAA-1090 / DSM 15013).